The chain runs to 351 residues: Synaptonemal complex central element protein 1 (351 aa).

Over residues 1-10 (MAGRSLTSKA) the composition is skewed to polar residues. 2 disordered regions span residues 1 to 31 (MAGR…TSSQ) and 267 to 351 (KCQQ…KELF). A coiled-coil region spans residues 52–290 (RVEVLINRIN…ELEKHGMQVP (239 aa)).

The protein belongs to the SYCE family. In terms of assembly, homodimer. Found in a complex with SYCP1 and SYCE2. Interacts with SYCP1, SYCE2 and SYCE3. Interacts with SIX6OS1.

The protein resides in the nucleus. Its subcellular location is the chromosome. Its function is as follows. Major component of the transverse central element of synaptonemal complexes (SCS), formed between homologous chromosomes during meiotic prophase. Requires SYCP1 in order to be incorporated into the central element. May have a role in the synaptonemal complex assembly, stabilization and recombination. The protein is Synaptonemal complex central element protein 1 (SYCE1) of Homo sapiens (Human).